Consider the following 314-residue polypeptide: Lipoyl synthase (314 aa).

The disordered stretch occupies residues methionine 1–proline 24. Residues cysteine 53, cysteine 58, cysteine 64, cysteine 79, cysteine 83, cysteine 86, and serine 293 each coordinate [4Fe-4S] cluster. The Radical SAM core domain occupies tryptophan 65–leucine 282. Basic and acidic residues predominate over residues histidine 294–glutamine 308. Residues histidine 294–lysine 314 are disordered.

The protein belongs to the radical SAM superfamily. Lipoyl synthase family. The cofactor is [4Fe-4S] cluster.

It is found in the cytoplasm. It catalyses the reaction [[Fe-S] cluster scaffold protein carrying a second [4Fe-4S](2+) cluster] + N(6)-octanoyl-L-lysyl-[protein] + 2 oxidized [2Fe-2S]-[ferredoxin] + 2 S-adenosyl-L-methionine + 4 H(+) = [[Fe-S] cluster scaffold protein] + N(6)-[(R)-dihydrolipoyl]-L-lysyl-[protein] + 4 Fe(3+) + 2 hydrogen sulfide + 2 5'-deoxyadenosine + 2 L-methionine + 2 reduced [2Fe-2S]-[ferredoxin]. Its pathway is protein modification; protein lipoylation via endogenous pathway; protein N(6)-(lipoyl)lysine from octanoyl-[acyl-carrier-protein]: step 2/2. Catalyzes the radical-mediated insertion of two sulfur atoms into the C-6 and C-8 positions of the octanoyl moiety bound to the lipoyl domains of lipoate-dependent enzymes, thereby converting the octanoylated domains into lipoylated derivatives. This Rhodospirillum rubrum (strain ATCC 11170 / ATH 1.1.1 / DSM 467 / LMG 4362 / NCIMB 8255 / S1) protein is Lipoyl synthase.